The primary structure comprises 917 residues: DNA repair endonuclease XPF (917 aa).

The tract at residues 1-457 (MEPGLSGERR…EVWVNVRKGD (457 aa)) is helicase-like. Leucine-zipper regions lie at residues 233-254 (LNAC…DLSL) and 270-298 (LDPL…LQYL). At Lys-289 the chain carries N6-acetyllysine. Over residues 454 to 479 (RKGDGPKRTTKSDKRPKAAPNKERAS) the composition is skewed to basic and acidic residues. Disordered stretches follow at residues 454–524 (RKGD…SSPE) and 643–681 (VPEE…QNGT). The Nuclear localization signal signature appears at 487–492 (KRKKQE). Basic and acidic residues predominate over residues 507–516 (EDKALEEDLC). Ser-522 is subject to Phosphoserine. Positions 643-653 (VPEEREGRDET) are enriched in basic and acidic residues. The interval 659–814 (RGSAALDAPT…PSPHATAELF (156 aa)) is nuclease. The 81-residue stretch at 684–764 (SIVVDMREFR…RPVLLIEFDP (81 aa)) folds into the ERCC4 domain. Ser-765 carries the phosphoserine modification. The hhH2, dimerization with ERCC1 stretch occupies residues 838-906 (TLPESDRYNP…QLHDFLHTAY (69 aa)). Lys-912 bears the N6-acetyllysine mark.

Belongs to the XPF family. In terms of assembly, heterodimer composed of ERCC1 and ERCC4/XPF. Interacts with SLX4/BTBD12; this interaction is direct and links the ERCC1-ERCC4/XPF complex to SLX4, which may coordinate the action of the structure-specific endonuclease during DNA repair. It depends on Mg(2+) as a cofactor. Acetylation at Lys-912 by KAT5 promotes interaction with ERCC1 by disrupting a salt bridge between Asp-908 and Lys-912, thereby exposing a second binding site for ERCC1. Deacetylated by SIRT1.

It localises to the nucleus. It is found in the chromosome. In terms of biological role, catalytic component of a structure-specific DNA repair endonuclease responsible for the 5-prime incision during DNA repair, and which is essential for nucleotide excision repair (NER) and interstrand cross-link (ICL) repair. The sequence is that of DNA repair endonuclease XPF from Mus musculus (Mouse).